Consider the following 711-residue polypeptide: Ribosomal RNA large subunit methyltransferase K/L (711 aa).

The THUMP domain maps to 43 to 154 (TLYRTLLWSR…RENLVISLDL (112 aa)).

This sequence belongs to the methyltransferase superfamily. RlmKL family.

It localises to the cytoplasm. It catalyses the reaction guanosine(2445) in 23S rRNA + S-adenosyl-L-methionine = N(2)-methylguanosine(2445) in 23S rRNA + S-adenosyl-L-homocysteine + H(+). It carries out the reaction guanosine(2069) in 23S rRNA + S-adenosyl-L-methionine = N(2)-methylguanosine(2069) in 23S rRNA + S-adenosyl-L-homocysteine + H(+). In terms of biological role, specifically methylates the guanine in position 2445 (m2G2445) and the guanine in position 2069 (m7G2069) of 23S rRNA. The chain is Ribosomal RNA large subunit methyltransferase K/L from Haemophilus influenzae (strain ATCC 51907 / DSM 11121 / KW20 / Rd).